The chain runs to 290 residues: Protein EURL homolog (290 aa).

The disordered stretch occupies residues 185–206 (SHSQAQKTEETSSGPEGTIQTQ). A coiled-coil region spans residues 228–251 (AKLQQRIQEVFEELTHQVQEKDSL).

Belongs to the EURL family. In terms of assembly, interacts with CCDC85B. In terms of tissue distribution, expressed in brain (at protein level). Expressed in neural progenitor cells and postmitotic neurons of the embryonic cerebral cortex.

Functionally, plays a role in cortical progenitor cell proliferation and differentiation. Promotes dendritic spine development of post-migratory cortical projection neurons by modulating the beta-catenin signaling pathway. The chain is Protein EURL homolog from Mus musculus (Mouse).